Here is an 88-residue protein sequence, read N- to C-terminus: Large ribosomal subunit protein bL27 (88 aa).

The tract at residues 1 to 24 is disordered; that stretch reads MAHKKGTGSTRNGRDSNSKRLGVK.

Belongs to the bacterial ribosomal protein bL27 family.

This is Large ribosomal subunit protein bL27 from Synechococcus sp. (strain CC9311).